The chain runs to 93 residues: UPF0298 protein GWCH70_0997 (93 aa).

This sequence belongs to the UPF0298 family.

The protein localises to the cytoplasm. The chain is UPF0298 protein GWCH70_0997 from Geobacillus sp. (strain WCH70).